The primary structure comprises 411 residues: Lysosome-associated membrane glycoprotein 3 (411 aa).

Positions 1 to 21 (MPGQISAVAVLFLSLTVILHG) are cleaved as a signal peptide. At 22-376 (YQIREKEFPK…NVNECLSDYT (355 aa)) the chain is on the lumenal side. Residues 172-192 (HKSTTNQRPTLSTNVLGTSTP) show a composition bias toward polar residues. Residues 172-204 (HKSTTNQRPTLSTNVLGTSTPTHKDRSTTSPVP) form a disordered region. A glycan (N-linked (GlcNAc...) asparagine) is linked at N227. 2 disulfide bridges follow: C232–C269 and C334–C371. The helical transmembrane segment at 377–397 (VVLPMVAIIVVVICVVGLSVY) threads the bilayer. Residues 398 to 411 (KIRQRHQSSAYQRI) lie on the Cytoplasmic side of the membrane.

This sequence belongs to the LAMP family. In terms of assembly, monomer. Interacts with FURIN.

Its subcellular location is the cell surface. It localises to the lysosome membrane. The protein localises to the cytoplasmic vesicle membrane. The protein resides in the early endosome membrane. Lysosomal membrane glycoprotein which plays a role in the unfolded protein response (UPR) that contributes to protein degradation and cell survival during proteasomal dysfunction. Plays a role in the process of fusion of the lysosome with the autophagosome, thereby modulating the autophagic process. Promotes hepatocellular lipogenesis through activation of the PI3K/Akt pathway. May also play a role in dendritic cell function and in adaptive immunity. The sequence is that of Lysosome-associated membrane glycoprotein 3 (Lamp3) from Mus musculus (Mouse).